A 108-amino-acid polypeptide reads, in one-letter code: Beta-defensin 126 (108 aa).

Positions 1-20 are cleaved as a signal peptide; the sequence is MKSLLFTLAVFMLLAQLVSG. Positions 21–63 are in vitro binds to LPS, mediates antimicrobial activity and inhibits LPS-mediated inflammation; that stretch reads NWYVKKCLNDVGICKKKCKPGEMHIKNGWATCGKQRDCCVPAD. 3 disulfides stabilise this stretch: cysteine 27–cysteine 58, cysteine 34–cysteine 52, and cysteine 38–cysteine 59.

Belongs to the beta-defensin family. As to quaternary structure, homodimer or homooligomer; disulfide-linked. In terms of processing, O-glycosylated; glycans contain alpha(2,3)-linked sialic acids.

It is found in the secreted. Highly glycosylated atypical beta-defensin involved in several aspects of sperm function. Facilitates sperm transport in the female reproductive tract and contributes to sperm protection against immunodetection; both functions are probably implicating the negative surface charge provided by its O-linked oligosaccharides in the sperm glycocalyx. Involved in binding of sperm to oviductal epithelial cells to form a sperm reservoir until ovulation. Release from the sperm surface during capacitation and ovaluation by an elevation of oviductal fluid pH is unmasking other surface components and allows sperm to penetrate the cumulus matrix and bind to the zona pellucida of the oocyte. In vitro has antimicrobial activity and may inhibit LPS-mediated inflammation. The sequence is that of Beta-defensin 126 (DEFB126) from Pan troglodytes (Chimpanzee).